Reading from the N-terminus, the 498-residue chain is DNA primase (498 aa).

The segment at 35 to 59 adopts a CHC2-type zinc-finger fold; the sequence is CPFHPDDTPSFYVSPSKQIFKCFGC. A Toprim domain is found at 243-324; it reads GFAILVEGYF…EVYPVYLPEG (82 aa). Mg(2+) contacts are provided by Glu249, Asp293, and Asp295.

Belongs to the DnaG primase family. As to quaternary structure, monomer. Interacts with DnaB. It depends on Zn(2+) as a cofactor. The cofactor is Mg(2+).

It catalyses the reaction ssDNA + n NTP = ssDNA/pppN(pN)n-1 hybrid + (n-1) diphosphate.. Its function is as follows. RNA polymerase that catalyzes the synthesis of short RNA molecules used as primers for DNA polymerase during DNA replication. The sequence is that of DNA primase from Aquifex aeolicus (strain VF5).